Here is a 135-residue protein sequence, read N- to C-terminus: Large ribosomal subunit protein uL22 (135 aa).

Belongs to the universal ribosomal protein uL22 family. Part of the 50S ribosomal subunit.

In terms of biological role, this protein binds specifically to 23S rRNA; its binding is stimulated by other ribosomal proteins, e.g. L4, L17, and L20. It is important during the early stages of 50S assembly. It makes multiple contacts with different domains of the 23S rRNA in the assembled 50S subunit and ribosome. Functionally, the globular domain of the protein is located near the polypeptide exit tunnel on the outside of the subunit, while an extended beta-hairpin is found that lines the wall of the exit tunnel in the center of the 70S ribosome. This chain is Large ribosomal subunit protein uL22, found in Christiangramia forsetii (strain DSM 17595 / CGMCC 1.15422 / KT0803) (Gramella forsetii).